A 223-amino-acid chain; its full sequence is 2-C-methyl-D-erythritol 4-phosphate cytidylyltransferase (223 aa).

The protein belongs to the IspD/TarI cytidylyltransferase family. IspD subfamily.

It catalyses the reaction 2-C-methyl-D-erythritol 4-phosphate + CTP + H(+) = 4-CDP-2-C-methyl-D-erythritol + diphosphate. It participates in isoprenoid biosynthesis; isopentenyl diphosphate biosynthesis via DXP pathway; isopentenyl diphosphate from 1-deoxy-D-xylulose 5-phosphate: step 2/6. Catalyzes the formation of 4-diphosphocytidyl-2-C-methyl-D-erythritol from CTP and 2-C-methyl-D-erythritol 4-phosphate (MEP). The protein is 2-C-methyl-D-erythritol 4-phosphate cytidylyltransferase of Prochlorococcus marinus (strain MIT 9215).